Consider the following 281-residue polypeptide: Large ribosomal subunit protein uL2 (281 aa).

2 disordered regions span residues 1–23 and 224–281; these read MAVK…DYSK and RGSV…KDSK. Over residues 12-23 the composition is skewed to polar residues; that stretch reads GRRNMSSLDYSK. Over residues 261-281 the composition is skewed to basic residues; sequence KTRKTKKSSTKLILRRRKDSK.

This sequence belongs to the universal ribosomal protein uL2 family. Part of the 50S ribosomal subunit. Forms a bridge to the 30S subunit in the 70S ribosome.

Its function is as follows. One of the primary rRNA binding proteins. Required for association of the 30S and 50S subunits to form the 70S ribosome, for tRNA binding and peptide bond formation. It has been suggested to have peptidyltransferase activity; this is somewhat controversial. Makes several contacts with the 16S rRNA in the 70S ribosome. The polypeptide is Large ribosomal subunit protein uL2 (Mycoplasmopsis agalactiae (strain NCTC 10123 / CIP 59.7 / PG2) (Mycoplasma agalactiae)).